The chain runs to 157 residues: 2-C-methyl-D-erythritol 2,4-cyclodiphosphate synthase (157 aa).

The a divalent metal cation site is built by Asp9 and His11. 4-CDP-2-C-methyl-D-erythritol 2-phosphate-binding positions include 9 to 11 and 35 to 36; these read DVH and HS. Residue His43 participates in a divalent metal cation binding. 4-CDP-2-C-methyl-D-erythritol 2-phosphate-binding positions include 57–59, 62–66, 101–107, 133–136, Phe140, and Arg143; these read DIG, FPDTD, AEKPKMA, and TTTE.

The protein belongs to the IspF family. Homotrimer. A divalent metal cation is required as a cofactor.

The catalysed reaction is 4-CDP-2-C-methyl-D-erythritol 2-phosphate = 2-C-methyl-D-erythritol 2,4-cyclic diphosphate + CMP. The protein operates within isoprenoid biosynthesis; isopentenyl diphosphate biosynthesis via DXP pathway; isopentenyl diphosphate from 1-deoxy-D-xylulose 5-phosphate: step 4/6. Its function is as follows. Involved in the biosynthesis of isopentenyl diphosphate (IPP) and dimethylallyl diphosphate (DMAPP), two major building blocks of isoprenoid compounds. Catalyzes the conversion of 4-diphosphocytidyl-2-C-methyl-D-erythritol 2-phosphate (CDP-ME2P) to 2-C-methyl-D-erythritol 2,4-cyclodiphosphate (ME-CPP) with a corresponding release of cytidine 5-monophosphate (CMP). This Listeria monocytogenes serotype 4b (strain F2365) protein is 2-C-methyl-D-erythritol 2,4-cyclodiphosphate synthase.